A 286-amino-acid polypeptide reads, in one-letter code: Putative movement protein 3 (286 aa).

Belongs to the nucleorhabdovirus type-1 movement protein family.

Transports viral genome to neighboring plant cells directly through plasmosdesmata, without any budding. The movement protein allows efficient cell to cell propagation, by bypassing the host cell wall barrier. The protein is Putative movement protein 3 (3) of Rottboellia (Sorghum).